The following is a 217-amino-acid chain: Large ribosomal subunit protein uL1 (217 aa).

Position 11 is a phosphotyrosine (Tyr-11). Lys-91 and Lys-106 each carry N6-acetyllysine. Lys-118 is modified (N6-acetyllysine; alternate). Lys-118 participates in a covalent cross-link: Glycyl lysine isopeptide (Lys-Gly) (interchain with G-Cter in SUMO1); alternate. Lys-118 is covalently cross-linked (Glycyl lysine isopeptide (Lys-Gly) (interchain with G-Cter in SUMO2); alternate). Lys-161 is covalently cross-linked (Glycyl lysine isopeptide (Lys-Gly) (interchain with G-Cter in SUMO2)).

This sequence belongs to the universal ribosomal protein uL1 family. As to quaternary structure, component of the large ribosomal subunit.

It localises to the cytoplasm. Component of the large ribosomal subunit. The ribosome is a large ribonucleoprotein complex responsible for the synthesis of proteins in the cell. The chain is Large ribosomal subunit protein uL1 (RPL10A) from Oryctolagus cuniculus (Rabbit).